A 668-amino-acid chain; its full sequence is Envelope glycoprotein (668 aa).

An N-terminal signal peptide occupies residues 1-34 (MEGPTHPKPSKDKTFSWDLIILVGVLLRLDAGMA). Residues 35–605 (NPSPHQVYNI…FNKSPWFTTL (571 aa)) are Extracellular-facing. N-linked (GlcNAc...) asparagine; by host glycosylation is found at Asn-43 and Asn-58. Intrachain disulfides connect Cys-115–Cys-132 and Cys-124–Cys-137. The tract at residues 243–264 (PQAMGPNPVLPDQKPPSRQSQI) is disordered. Asn-286, Asn-322, and Asn-327 each carry an N-linked (GlcNAc...) asparagine; by host glycan. Disulfide bonds link Cys-332/Cys-335, Cys-332/Cys-558, and Cys-550/Cys-557. Positions 332-335 (CWLC) match the CXXC motif. 5 N-linked (GlcNAc...) asparagine; by host glycosylation sites follow: Asn-351, Asn-354, Asn-394, Asn-410, and Asn-430. The segment at 467-487 (PISLTVALMLGGITVGGMARN) is fusion peptide. Coiled coils occupy residues 495 to 544 (LETA…ILFL) and 554 to 590 (KEEC…SQQD). The segment at 533 to 549 (LQNRRGLDILFLQEGGL) is immunosuppression. Residues 550–558 (CTALKEECC) carry the CX6CC motif. The helical transmembrane segment at 606-626 (ISSIMGPLMILLLILLFGPCI) threads the bilayer. Cys-625 carries the S-palmitoyl cysteine; by host lipid modification. Residues 627-668 (LNRLVQFVKDRISVVQTLVLTQQYQRLGQWRLRPTVSPQLNV) lie on the Cytoplasmic side of the membrane. Positions 650–653 (YQRL) match the YXXL motif; contains endocytosis signal motif.

The mature envelope protein (Env) consists of a trimer of SU-TM heterodimers attached by a labile interchain disulfide bond. Post-translationally, specific enzymatic cleavages in vivo yield mature proteins. Envelope glycoproteins are synthesized as an inactive precursor that is N-glycosylated and processed likely by host cell furin or by a furin-like protease in the Golgi to yield the mature SU and TM proteins. The cleavage site between SU and TM requires the minimal sequence [KR]-X-[KR]-R. The R-peptide is released from the C-terminus of the cytoplasmic tail of the TM protein upon particle formation as a result of proteolytic cleavage by the viral protease. Cleavage of this peptide is required for TM to become fusogenic. In terms of processing, the CXXC motif is highly conserved across a broad range of retroviral envelope proteins. It is thought to participate in the formation of a labile disulfide bond possibly with the CX6CC motif present in the transmembrane protein. Isomerization of the intersubunit disulfide bond to an SU intrachain disulfide bond is thought to occur upon receptor recognition in order to allow membrane fusion. The transmembrane protein is palmitoylated. Post-translationally, the R-peptide is palmitoylated.

Its subcellular location is the virion membrane. The protein resides in the host cell membrane. Its function is as follows. The surface protein (SU) attaches the virus to the host cell by binding to its receptor. This interaction triggers the refolding of the transmembrane protein (TM) and is thought to activate its fusogenic potential by unmasking its fusion peptide. Fusion occurs at the host cell plasma membrane. In terms of biological role, the transmembrane protein (TM) acts as a class I viral fusion protein. Under the current model, the protein has at least 3 conformational states: pre-fusion native state, pre-hairpin intermediate state, and post-fusion hairpin state. During viral and target cell membrane fusion, the coiled coil regions (heptad repeats) assume a trimer-of-hairpins structure, positioning the fusion peptide in close proximity to the C-terminal region of the ectodomain. The formation of this structure appears to drive apposition and subsequent fusion of viral and target cell membranes. Membranes fusion leads to delivery of the nucleocapsid into the cytoplasm. This chain is Envelope glycoprotein (env), found in Felidae (cat family).